Here is a 931-residue protein sequence, read N- to C-terminus: Protein translocase subunit SecA (931 aa).

ATP is bound by residues glutamine 87, 105–109 (GEGKT), and aspartate 515. Positions 915, 917, 926, and 927 each coordinate Zn(2+).

The protein belongs to the SecA family. As to quaternary structure, monomer and homodimer. Part of the essential Sec protein translocation apparatus which comprises SecA, SecYEG and auxiliary proteins SecDF-YajC and YidC. The cofactor is Zn(2+).

Its subcellular location is the cell inner membrane. It is found in the cytoplasm. The catalysed reaction is ATP + H2O + cellular proteinSide 1 = ADP + phosphate + cellular proteinSide 2.. Functionally, part of the Sec protein translocase complex. Interacts with the SecYEG preprotein conducting channel. Has a central role in coupling the hydrolysis of ATP to the transfer of proteins into and across the cell membrane, serving both as a receptor for the preprotein-SecB complex and as an ATP-driven molecular motor driving the stepwise translocation of polypeptide chains across the membrane. This is Protein translocase subunit SecA from Burkholderia ambifaria (strain MC40-6).